The primary structure comprises 329 residues: Pantothenate kinase (329 aa).

The segment at 1–21 (MISPVPSIPRSAHRQRPEATP) is disordered. ATP is bound at residue 107–114 (GSVAVGKS).

Belongs to the prokaryotic pantothenate kinase family.

It is found in the cytoplasm. The enzyme catalyses (R)-pantothenate + ATP = (R)-4'-phosphopantothenate + ADP + H(+). Its pathway is cofactor biosynthesis; coenzyme A biosynthesis; CoA from (R)-pantothenate: step 1/5. The chain is Pantothenate kinase (coaA) from Streptomyces coelicolor (strain ATCC BAA-471 / A3(2) / M145).